The sequence spans 484 residues: RxLR effector protein PexRD18 (484 aa).

The N-terminal stretch at 1-20 is a signal peptide; the sequence is MSHQRILLLLMAAFFAWVSA. A RxLR-dEER motif is present at residues 55–79; the sequence is RFLRLYDAEVRDTVRGDNDVDREER.

This sequence belongs to the RxLR effector family.

The protein resides in the secreted. Its subcellular location is the host cell membrane. Its function is as follows. Effector that enhances P.infestans colonization of Nicotiana benthamiana leaves. This Phytophthora infestans (strain T30-4) (Potato late blight agent) protein is RxLR effector protein PexRD18.